The following is a 264-amino-acid chain: NADH dehydrogenase [ubiquinone] iron-sulfur protein 3, mitochondrial (264 aa).

The N-terminal 36 residues, 1–36 (MAAAAVARLWWRGILGASALTRGTGRPSVLLLPVRR), are a transit peptide targeting the mitochondrion.

This sequence belongs to the complex I 30 kDa subunit family. Core subunit of respiratory chain NADH dehydrogenase (Complex I) which is composed of 45 different subunits. Interacts with NDUFAF3. Interacts with RAB5IF. Found in subcomplexes containing subunits NDUFS2, MT-ND1 and NDUFA13.

The protein resides in the mitochondrion inner membrane. The catalysed reaction is a ubiquinone + NADH + 5 H(+)(in) = a ubiquinol + NAD(+) + 4 H(+)(out). In terms of biological role, core subunit of the mitochondrial membrane respiratory chain NADH dehydrogenase (Complex I) which catalyzes electron transfer from NADH through the respiratory chain, using ubiquinone as an electron acceptor. Essential for the catalytic activity and assembly of complex I. This Pan troglodytes (Chimpanzee) protein is NADH dehydrogenase [ubiquinone] iron-sulfur protein 3, mitochondrial (NDUFS3).